The primary structure comprises 133 residues: Protein U17 (133 aa).

Residues 82–102 (FVSVLWCVILVFVVKIKLFFL) traverse the membrane as a helical segment.

Its subcellular location is the membrane. This is Protein U17 (U17/U16) from Homo sapiens (Human).